We begin with the raw amino-acid sequence, 267 residues long: Undecaprenyl-diphosphatase (267 aa).

A run of 7 helical transmembrane segments spans residues 1–21 (MSLFTLFLLALVQGITEFLPI), 40–60 (GQAIDVAVHVGTLGAVILYFW), 85–105 (LAFLLIIATIPVIIFGLFLEV), 112–132 (LRSIAVIGWTMLIFGLVLYWA), 189–209 (AMLMSIPTIIATGVFAGAEVI), 219–239 (DGAIAAALSFLAALAALTLMF), and 245–265 (VSFTPYVIYRVILGVILLVIA).

The protein belongs to the UppP family.

Its subcellular location is the cell inner membrane. It catalyses the reaction di-trans,octa-cis-undecaprenyl diphosphate + H2O = di-trans,octa-cis-undecaprenyl phosphate + phosphate + H(+). In terms of biological role, catalyzes the dephosphorylation of undecaprenyl diphosphate (UPP). Confers resistance to bacitracin. This is Undecaprenyl-diphosphatase from Jannaschia sp. (strain CCS1).